The sequence spans 234 residues: Leucyl/phenylalanyl-tRNA--protein transferase (234 aa).

This sequence belongs to the L/F-transferase family.

The protein localises to the cytoplasm. The enzyme catalyses N-terminal L-lysyl-[protein] + L-leucyl-tRNA(Leu) = N-terminal L-leucyl-L-lysyl-[protein] + tRNA(Leu) + H(+). The catalysed reaction is N-terminal L-arginyl-[protein] + L-leucyl-tRNA(Leu) = N-terminal L-leucyl-L-arginyl-[protein] + tRNA(Leu) + H(+). It catalyses the reaction L-phenylalanyl-tRNA(Phe) + an N-terminal L-alpha-aminoacyl-[protein] = an N-terminal L-phenylalanyl-L-alpha-aminoacyl-[protein] + tRNA(Phe). Its function is as follows. Functions in the N-end rule pathway of protein degradation where it conjugates Leu, Phe and, less efficiently, Met from aminoacyl-tRNAs to the N-termini of proteins containing an N-terminal arginine or lysine. The polypeptide is Leucyl/phenylalanyl-tRNA--protein transferase (Escherichia fergusonii (strain ATCC 35469 / DSM 13698 / CCUG 18766 / IAM 14443 / JCM 21226 / LMG 7866 / NBRC 102419 / NCTC 12128 / CDC 0568-73)).